We begin with the raw amino-acid sequence, 490 residues long: Serine hydroxymethyltransferase, mitochondrial (490 aa).

The transit peptide at 1–20 directs the protein to the mitochondrion; sequence MFPRASALAKCMATVHRRGL. At lysine 265 the chain carries N6-(pyridoxal phosphate)lysine.

Belongs to the SHMT family. As to quaternary structure, homotetramer. Interacts with NAP1. The cofactor is pyridoxal 5'-phosphate.

The protein resides in the mitochondrion. The enzyme catalyses (6R)-5,10-methylene-5,6,7,8-tetrahydrofolate + glycine + H2O = (6S)-5,6,7,8-tetrahydrofolate + L-serine. Its pathway is one-carbon metabolism; tetrahydrofolate interconversion. Functionally, interconversion of serine and glycine. This is Serine hydroxymethyltransferase, mitochondrial (SHM1) from Saccharomyces cerevisiae (strain ATCC 204508 / S288c) (Baker's yeast).